Reading from the N-terminus, the 338-residue chain is Glyceraldehyde-3-phosphate dehydrogenase, cytosolic (338 aa).

NAD(+)-binding positions include 14–15 (RI), D36, and R83. D-glyceraldehyde 3-phosphate is bound by residues 154-156 (SCT), T185, 214-215 (TG), and R237. Catalysis depends on C155, which acts as the Nucleophile. N319 provides a ligand contact to NAD(+).

This sequence belongs to the glyceraldehyde-3-phosphate dehydrogenase family. Homotetramer.

The protein localises to the cytoplasm. It carries out the reaction D-glyceraldehyde 3-phosphate + phosphate + NAD(+) = (2R)-3-phospho-glyceroyl phosphate + NADH + H(+). Its pathway is carbohydrate degradation; glycolysis; pyruvate from D-glyceraldehyde 3-phosphate: step 1/5. Its function is as follows. Key enzyme in glycolysis that catalyzes the first step of the pathway by converting D-glyceraldehyde 3-phosphate (G3P) into 3-phospho-D-glyceroyl phosphate. Essential for the maintenance of cellular ATP levels and carbohydrate metabolism. This Pisum sativum (Garden pea) protein is Glyceraldehyde-3-phosphate dehydrogenase, cytosolic (GAPC1).